We begin with the raw amino-acid sequence, 695 residues long: Elongation factor G (695 aa).

One can recognise a tr-type G domain in the interval 8 to 282 (KDTRNIGIMA…AIVDYMPAPI (275 aa)). GTP-binding positions include 17 to 24 (AHIDAGKT), 81 to 85 (DTPGH), and 135 to 138 (NKMD). Residues 285–304 (PDIKGVDPQTDEPTTRKSSD) form a disordered region.

It belongs to the TRAFAC class translation factor GTPase superfamily. Classic translation factor GTPase family. EF-G/EF-2 subfamily.

It localises to the cytoplasm. In terms of biological role, catalyzes the GTP-dependent ribosomal translocation step during translation elongation. During this step, the ribosome changes from the pre-translocational (PRE) to the post-translocational (POST) state as the newly formed A-site-bound peptidyl-tRNA and P-site-bound deacylated tRNA move to the P and E sites, respectively. Catalyzes the coordinated movement of the two tRNA molecules, the mRNA and conformational changes in the ribosome. In Finegoldia magna (strain ATCC 29328 / DSM 20472 / WAL 2508) (Peptostreptococcus magnus), this protein is Elongation factor G.